The following is a 290-amino-acid chain: MRNKSQSFISSKLIFICCSILVLFILFLKRASFSSNSTATIRDEYHQKSKCPSTPQQCTKLPTSLSDALVHYVTSEITPQQTFDEVSVSKRVLDKKSPCNFLVFGLGHDSLMWASLNHGGRTLFLEEDEAWIETVTKKFPNLESYHVVYDTKVKDSNKLMELKRTEDCKAVSDPRDSKCALSLKGFPADVYETQWDVIMVDAPTGYHDEAPGRMSAIYTAGLLARNRYDGGETDVFVHDINRPVEDEFSVAFLCGGYMKEQQGRLRHFNIPSHRASFGTPFCPADISRRF.

The chain crosses the membrane as a helical span at residues 8-28 (FISSKLIFICCSILVLFILFL).

It belongs to the methyltransferase superfamily. In terms of tissue distribution, expressed in roots, rosette leaves and stems.

The protein resides in the golgi apparatus membrane. The catalysed reaction is glucuronoxylan D-glucuronate + n S-adenosyl-L-methionine = glucuronoxylan 4-O-methyl-D-glucuronate + n S-adenosyl-L-homocysteine + n H(+). Methyltransferase catalyzing 4-O-methylation of glucuronic acid side chains on xylan. This is Glucuronoxylan 4-O-methyltransferase 2 (GXM2) from Arabidopsis thaliana (Mouse-ear cress).